Here is a 143-residue protein sequence, read N- to C-terminus: Large-conductance mechanosensitive channel (143 aa).

The next 2 helical transmembrane spans lie at 10-30 (FAVK…GAFS) and 89-109 (GSFI…FLMV).

Belongs to the MscL family. Homopentamer.

The protein localises to the cell inner membrane. Functionally, channel that opens in response to stretch forces in the membrane lipid bilayer. May participate in the regulation of osmotic pressure changes within the cell. This is Large-conductance mechanosensitive channel from Burkholderia ambifaria (strain ATCC BAA-244 / DSM 16087 / CCUG 44356 / LMG 19182 / AMMD) (Burkholderia cepacia (strain AMMD)).